The primary structure comprises 428 residues: Gamma-glutamyl phosphate reductase (428 aa).

It belongs to the gamma-glutamyl phosphate reductase family.

Its subcellular location is the cytoplasm. The catalysed reaction is L-glutamate 5-semialdehyde + phosphate + NADP(+) = L-glutamyl 5-phosphate + NADPH + H(+). It participates in amino-acid biosynthesis; L-proline biosynthesis; L-glutamate 5-semialdehyde from L-glutamate: step 2/2. In terms of biological role, catalyzes the NADPH-dependent reduction of L-glutamate 5-phosphate into L-glutamate 5-semialdehyde and phosphate. The product spontaneously undergoes cyclization to form 1-pyrroline-5-carboxylate. This is Gamma-glutamyl phosphate reductase from Clostridium tetani (strain Massachusetts / E88).